Reading from the N-terminus, the 723-residue chain is Polyribonucleotide nucleotidyltransferase (723 aa).

Mg(2+)-binding residues include Asp-488 and Asp-494. Positions 555 to 614 constitute a KH domain; it reads PKIITLNIKPEKIKDVIGPGGKQINAIIDETGVKIDIEQDGTVYIASQDQAMNRKAIAII. The region spanning 624-692 is the S1 motif domain; sequence GEVYTGKVRR…QQGRVNLSRK (69 aa). The disordered stretch occupies residues 692–723; that stretch reads KALLEKKEQPEGDKKPQAEKKFYPKTKKPESK. Basic and acidic residues predominate over residues 693–723; the sequence is ALLEKKEQPEGDKKPQAEKKFYPKTKKPESK.

It belongs to the polyribonucleotide nucleotidyltransferase family. Requires Mg(2+) as cofactor.

It localises to the cytoplasm. The catalysed reaction is RNA(n+1) + phosphate = RNA(n) + a ribonucleoside 5'-diphosphate. Involved in mRNA degradation. Catalyzes the phosphorolysis of single-stranded polyribonucleotides processively in the 3'- to 5'-direction. The sequence is that of Polyribonucleotide nucleotidyltransferase from Listeria monocytogenes serovar 1/2a (strain ATCC BAA-679 / EGD-e).